The primary structure comprises 314 residues: Ribosomal protein L11 methyltransferase (314 aa).

4 residues coordinate S-adenosyl-L-methionine: threonine 163, glycine 184, aspartate 206, and asparagine 248.

Belongs to the methyltransferase superfamily. PrmA family.

Its subcellular location is the cytoplasm. The enzyme catalyses L-lysyl-[protein] + 3 S-adenosyl-L-methionine = N(6),N(6),N(6)-trimethyl-L-lysyl-[protein] + 3 S-adenosyl-L-homocysteine + 3 H(+). Functionally, methylates ribosomal protein L11. The sequence is that of Ribosomal protein L11 methyltransferase from Lactobacillus delbrueckii subsp. bulgaricus (strain ATCC BAA-365 / Lb-18).